The chain runs to 417 residues: Serine hydroxymethyltransferase (417 aa).

(6S)-5,6,7,8-tetrahydrofolate contacts are provided by residues L121 and 125 to 127; that span reads GHL. The residue at position 229 (K229) is an N6-(pyridoxal phosphate)lysine. 355 to 357 provides a ligand contact to (6S)-5,6,7,8-tetrahydrofolate; the sequence is SPF.

This sequence belongs to the SHMT family. As to quaternary structure, homodimer. Pyridoxal 5'-phosphate serves as cofactor.

It is found in the cytoplasm. It catalyses the reaction (6R)-5,10-methylene-5,6,7,8-tetrahydrofolate + glycine + H2O = (6S)-5,6,7,8-tetrahydrofolate + L-serine. It participates in one-carbon metabolism; tetrahydrofolate interconversion. The protein operates within amino-acid biosynthesis; glycine biosynthesis; glycine from L-serine: step 1/1. Functionally, catalyzes the reversible interconversion of serine and glycine with tetrahydrofolate (THF) serving as the one-carbon carrier. This reaction serves as the major source of one-carbon groups required for the biosynthesis of purines, thymidylate, methionine, and other important biomolecules. Also exhibits THF-independent aldolase activity toward beta-hydroxyamino acids, producing glycine and aldehydes, via a retro-aldol mechanism. This is Serine hydroxymethyltransferase from Salmonella schwarzengrund (strain CVM19633).